Here is a 198-residue protein sequence, read N- to C-terminus: NAD(P)H dehydrogenase (quinone) (198 aa).

One can recognise a Flavodoxin-like domain in the interval 4–189 (VLVLYYSMYG…SIARYQGEYV (186 aa)). Residues 10–15 (SMYGHI) and 78–80 (TRF) contribute to the FMN site. Tyr-12 lines the NAD(+) pocket. Residue Trp-98 coordinates substrate. Residues 113 to 118 (STGTGG) and His-133 contribute to the FMN site.

This sequence belongs to the WrbA family. Requires FMN as cofactor.

It catalyses the reaction a quinone + NADH + H(+) = a quinol + NAD(+). The enzyme catalyses a quinone + NADPH + H(+) = a quinol + NADP(+). The chain is NAD(P)H dehydrogenase (quinone) from Escherichia coli O157:H7.